A 315-amino-acid polypeptide reads, in one-letter code: Mycothiol acetyltransferase (315 aa).

2 N-acetyltransferase domains span residues 8–145 (VETS…LPLD) and 163–315 (VSLR…DATA). Glu39 lines the 1D-myo-inositol 2-(L-cysteinylamino)-2-deoxy-alpha-D-glucopyranoside pocket. Acetyl-CoA is bound by residues 81–83 (LVV) and 89–94 (HHGVGT). 1D-myo-inositol 2-(L-cysteinylamino)-2-deoxy-alpha-D-glucopyranoside is bound by residues Glu190, Lys229, and Glu243. Acetyl-CoA is bound at residue 247 to 249 (LGV). A 1D-myo-inositol 2-(L-cysteinylamino)-2-deoxy-alpha-D-glucopyranoside-binding site is contributed by Tyr281. An acetyl-CoA-binding site is contributed by 286–291 (NTVAIR).

This sequence belongs to the acetyltransferase family. MshD subfamily. As to quaternary structure, monomer.

The enzyme catalyses 1D-myo-inositol 2-(L-cysteinylamino)-2-deoxy-alpha-D-glucopyranoside + acetyl-CoA = mycothiol + CoA + H(+). Catalyzes the transfer of acetyl from acetyl-CoA to desacetylmycothiol (Cys-GlcN-Ins) to form mycothiol. The sequence is that of Mycothiol acetyltransferase from Sanguibacter keddieii (strain ATCC 51767 / DSM 10542 / NCFB 3025 / ST-74).